Here is a 439-residue protein sequence, read N- to C-terminus: Rhodopsin (439 aa).

Residue Asn-1 is glycosylated (N-linked (GlcNAc...) asparagine). Residues 1 to 26 (NETWWYNPYMDIHSHWKQFDQVPAAV) are Extracellular-facing. The helical transmembrane segment at 27–51 (YYSLGIFIAICGIIGCAGNGIVIYL) threads the bilayer. The Cytoplasmic portion of the chain corresponds to 52 to 63 (FTKTKSLQTPAN). The helical transmembrane segment at 64 to 90 (MFIINLAFSDFTFSLVNGFPMMTISCF) threads the bilayer. The Extracellular segment spans residues 91-102 (LKHWVFGQAACK). Cys-101 and Cys-179 are joined by a disulfide. The helical transmembrane segment at 103–124 (VYGLIGGIFGLTSIMTMTMISI) threads the bilayer. Residues 125–127 (DRY) carry the 'Ionic lock' involved in activated form stabilization motif. At 125–144 (DRYNVIRRPMSASKKMSHRK) the chain is on the cytoplasmic side. Residues 145 to 165 (AFIMIVFVWIWSTIWAIGPIF) form a helical membrane-spanning segment. The Extracellular portion of the chain corresponds to 166–192 (GWGAYQLEGVLCNCSFDYITRDASTRS). A helical membrane pass occupies residues 193–217 (NIVCMYIFAFMFPIVVIFFCYFNIV). Topologically, residues 218–254 (MSVSNHEKEMAAMAKRLNAKELRKAQAGASAEMKLAK) are cytoplasmic. A helical transmembrane segment spans residues 255–276 (ISIVIVTQSLLSWSPYAIVALL). At 277–286 (AQFGPIEWVT) the chain is on the extracellular side. A helical transmembrane segment spans residues 287–308 (PYAAQLPVMFAKASAIHNPMIY). Lys-298 bears the N6-(retinylidene)lysine mark. Topologically, residues 309-439 (SVSHPKFREA…PQAAPPQGVD (131 aa)) are cytoplasmic. Residues Cys-329 and Cys-330 are each lipidated (S-palmitoyl cysteine). The segment covering 369-381 (MMQKMQAQQQQQP) has biased composition (low complexity). The interval 369-439 (MMQKMQAQQQ…PQAAPPQGVD (71 aa)) is disordered. Over residues 382-433 (AYPPQGYPPQGYPPPPPQGYPPQGYPPQGYPPQGYPPPPQGPPPQGPPPQAA) the composition is skewed to pro residues.

Belongs to the G-protein coupled receptor 1 family. Opsin subfamily. In terms of processing, contains one covalently linked retinal chromophore. Upon light absorption, the covalently bound 11-cis-retinal is converted to all-trans-retinal. After hydrolysis of the Schiff base and release of the covalently bound all-trans-retinal, active rhodopsin is regenerated by binding of a fresh molecule of 11-cis-retinal.

The protein localises to the cell projection. It localises to the rhabdomere membrane. In terms of biological role, photoreceptor required for image-forming vision at low light intensity. Light-induced isomerization of 11-cis to all-trans retinal triggers a conformational change that activates signaling via G-proteins. Signaling mediates the activation of phospholipase C. Subsequent receptor phosphorylation mediates displacement of the bound G-protein alpha subunit by arrestin and terminates signaling. The protein is Rhodopsin (RHO) of Alloteuthis subulata (Squid).